We begin with the raw amino-acid sequence, 202 residues long: Peptidyl-tRNA hydrolase (202 aa).

Tyr16 lines the tRNA pocket. The Proton acceptor role is filled by His21. TRNA contacts are provided by Tyr68, Asn70, and Asn116.

This sequence belongs to the PTH family. As to quaternary structure, monomer.

The protein localises to the cytoplasm. It catalyses the reaction an N-acyl-L-alpha-aminoacyl-tRNA + H2O = an N-acyl-L-amino acid + a tRNA + H(+). Hydrolyzes ribosome-free peptidyl-tRNAs (with 1 or more amino acids incorporated), which drop off the ribosome during protein synthesis, or as a result of ribosome stalling. Its function is as follows. Catalyzes the release of premature peptidyl moieties from peptidyl-tRNA molecules trapped in stalled 50S ribosomal subunits, and thus maintains levels of free tRNAs and 50S ribosomes. The chain is Peptidyl-tRNA hydrolase from Treponema pallidum (strain Nichols).